Reading from the N-terminus, the 165-residue chain is Phosphopantetheine adenylyltransferase (165 aa).

Position 10 (Ser-10) interacts with substrate. Residues Ser-10–Phe-11 and His-18 each bind ATP. Residues Lys-42, Thr-79, and Arg-93 each contribute to the substrate site. ATP is bound by residues Gly-94–Arg-96, Glu-104, and Val-129–Thr-135.

The protein belongs to the bacterial CoaD family. In terms of assembly, homohexamer. It depends on Mg(2+) as a cofactor.

It localises to the cytoplasm. The enzyme catalyses (R)-4'-phosphopantetheine + ATP + H(+) = 3'-dephospho-CoA + diphosphate. It functions in the pathway cofactor biosynthesis; coenzyme A biosynthesis; CoA from (R)-pantothenate: step 4/5. In terms of biological role, reversibly transfers an adenylyl group from ATP to 4'-phosphopantetheine, yielding dephospho-CoA (dPCoA) and pyrophosphate. This Rhodopseudomonas palustris (strain BisA53) protein is Phosphopantetheine adenylyltransferase.